The primary structure comprises 258 residues: uncharacterized protein (258 aa).

The next 4 membrane-spanning stretches (helical) occupy residues 33–53, 59–79, 88–108, and 140–160; these read LFVI…VTTN, FDSW…IFVF, LLYL…FSFF, and IIAL…WLIQ. The tract at residues 237–258 is disordered; the sequence is NNKINSELQPPSILNKNSKPIE. Over residues 242-258 the composition is skewed to polar residues; the sequence is SELQPPSILNKNSKPIE.

The protein localises to the membrane. This is an uncharacterized protein from Dictyostelium discoideum (Social amoeba).